Reading from the N-terminus, the 400-residue chain is Canavanine gamma-lyase (400 aa).

Residue Lys-213 is modified to N6-(pyridoxal phosphate)lysine.

It belongs to the trans-sulfuration enzymes family. Requires pyridoxal 5'-phosphate as cofactor.

It carries out the reaction L-canavanine + H2O = N-hydroxyguanidine + L-homoserine. Lyase involved in the degradation of canavanine, the delta-oxa-analog of arginine, allowing growth on canavanine as sole nitrogen and carbon source. Catalyzes the elimination of hydroxyguanidine from canavanine with a subsequent water addition to yield homoserine. Is highly specific for canavanine and cannot use methionine, cystathionine or arginine. This is Canavanine gamma-lyase from Pseudomonas canavaninivorans.